Reading from the N-terminus, the 94-residue chain is Small ribosomal subunit protein uS19 (94 aa).

A disordered region spans residues 73 to 94; it reads EFSPTRRFGGHADKKSKKGQVK.

This sequence belongs to the universal ribosomal protein uS19 family.

Protein S19 forms a complex with S13 that binds strongly to the 16S ribosomal RNA. The protein is Small ribosomal subunit protein uS19 of Kosmotoga olearia (strain ATCC BAA-1733 / DSM 21960 / TBF 19.5.1).